The chain runs to 1046 residues: UDP-N-acetylglucosamine--peptide N-acetylglucosaminyltransferase 110 kDa subunit (1046 aa).

Ala-2 carries the post-translational modification N-acetylalanine. Phosphoserine; by GSK3-beta; alternate is present on residues Ser-3 and Ser-4. Ser-3 and Ser-4 each carry an O-linked (GlcNAc) serine; alternate glycan. Asp-10 is a glycosylation site (O-linked (GlcNAc) serine). Thr-12 is a glycosylation site (O-linked (GlcNAc) threonine). O-linked (GlcNAc) serine glycosylation occurs at Met-18. Ser-20 bears the Phosphoserine mark. One copy of the TPR 1 repeat lies at 21 to 54; the sequence is FQGLAELAHREYQAGDFEAAERHCMQLWRQEPDN. Glu-38 is a glycosylation site (O-linked (GlcNAc) threonine). O-linked (GlcNAc) serine glycosylation is found at Pro-52 and Gly-56. TPR repeat units lie at residues 89-122, 123-156, 157-190, 191-224, 225-258, 259-292, 293-326, 327-360, 361-394, 395-428, and 429-462; these read AEAY…KPDF, IDGY…NPDL, YCVR…QPNF, AVAW…DPNF, LDAY…SPNH, AVVH…QPHF, PDAY…CPTH, ADSL…FPEF, AAAH…SPTF, ADAY…NPAF, and ADAH…KPDF. O-linked (GlcNAc) serine; by autocatalysis glycosylation occurs at Ser-399. A Phosphothreonine; by AMPK modification is found at Thr-454. One copy of the TPR 13; truncated repeat lies at 463–473; the sequence is PDAYCNLAHCL. A DFP motif motif is present at residues 464 to 466; it reads DAY. The Nuclear localization signal motif lies at 487–503; sequence KKLVSIVADQLEKNRLP. Catalysis depends on His-508, which acts as the Proton acceptor. Residues Gln-849, Lys-852, 906–908, 911–914, 930–932, and Asp-935 contribute to the UDP site; these read APK, HVRR, and HTT. Tyr-989 is modified (phosphotyrosine). The required for phosphatidylinositol 3,4,5-triphosphate binding stretch occupies residues 991 to 1010; sequence KKVRGKVWKQRISSPLFNTK.

Belongs to the glycosyltransferase 41 family. O-GlcNAc transferase subfamily. As to quaternary structure, monomer; may exist in different oligomerization states in cells. Homotrimer, oligomerizes via TPR repeats 6 and 7. Trimerization is not necessary for activity in vitro, however it increases affinity for UDP-GlcNAc. Component of a THAP1/THAP3-HCFC1-OGT complex. Component of the NSL complex at least composed of MOF/KAT8, KANSL1, KANSL2, KANSL3, MCRS1, PHF20, OGT1/OGT, WDR5 and HCFC1. Found in a complex with KIF5B, RHOT1, RHOT2 and TRAK1. Found in a complex composed of at least SINHCAF, SIN3A, HDAC1, SAP30, RBBP4, OGT and TET1. Component of a complex composed of KMT2E/MLL5 (isoform 3), OGT (isoform 1) and USP7; the complex stabilizes KMT2E/MLL5, preventing KMT2E/MLL5 ubiquitination and proteasomal-mediated degradation. Interacts (via TPRs 1-6) with SIN3A; the interaction mediates transcriptional repression in parallel with histone deacetylase. Interacts (via TPR 5-6) with TET1, TET2 and TET3. Interacts (via TPR repeats 6 and 7) with ATXN10. Interacts with NSD2. Interacts with PROSER1; this interaction mediates TET2 O-GlcNAcylation and stability by promoting the interaction between OGT and TET2. Interacts with USP7. In terms of assembly, (Microbial infection) Interacts with human T-cell leukemia virus 1/HTLV-1 protein Tax; this interaction increases Tax interacting partner CREB1 O-GlcNAcylation. Ubiquitinated by the SCF(FBXO31) complex, leading to its proteasomal degradation. In terms of processing, phosphorylation on Ser-3 or Ser-4 by GSK3-beta positively regulates its activity. Phosphorylation at Thr-454 by AMPK promotes nuclear localization. Post-translationally, glycosylated via autocatalysis; O-GlcNAcylation at Ser-399 promotes nuclear localization. Glycosylated via autocatalysis; does not affect the enzyme activity but regulates substrate selectivity. In terms of tissue distribution, highly expressed in pancreas and to a lesser extent in skeletal muscle, heart, brain and placenta. Present in trace amounts in lung and liver.

The protein localises to the nucleus. The protein resides in the cytoplasm. Its subcellular location is the mitochondrion. It is found in the membrane. It localises to the cell membrane. The protein localises to the mitochondrion membrane. The protein resides in the cell projection. It carries out the reaction L-seryl-[protein] + UDP-N-acetyl-alpha-D-glucosamine = 3-O-(N-acetyl-beta-D-glucosaminyl)-L-seryl-[protein] + UDP + H(+). It catalyses the reaction L-threonyl-[protein] + UDP-N-acetyl-alpha-D-glucosamine = 3-O-(N-acetyl-beta-D-glucosaminyl)-L-threonyl-[protein] + UDP + H(+). The protein operates within protein modification; protein glycosylation. With respect to regulation, subject to product inhibition by UDP. In terms of biological role, catalyzes the transfer of a single N-acetylglucosamine from UDP-GlcNAc to a serine or threonine residue in cytoplasmic and nuclear proteins resulting in their modification with a beta-linked N-acetylglucosamine (O-GlcNAc). Glycosylates a large and diverse number of proteins including histone H2B, AKT1, AMPK, ATG4B, CAPRIN1, EZH2, FNIP1, GSDMD, KRT7, LMNA, LMNB1, LMNB2, RPTOR, HOXA1, PFKL, KMT2E/MLL5, MAPT/TAU, TET2, RBL2, RET, NOD2 and HCFC1. Can regulate their cellular processes via cross-talk between glycosylation and phosphorylation or by affecting proteolytic processing. Involved in insulin resistance in muscle and adipocyte cells via glycosylating insulin signaling components and inhibiting the 'Thr-308' phosphorylation of AKT1, enhancing IRS1 phosphorylation and attenuating insulin signaling. Involved in glycolysis regulation by mediating glycosylation of 6-phosphofructokinase PFKL, inhibiting its activity. Plays a key role in chromatin structure by mediating O-GlcNAcylation of 'Ser-112' of histone H2B: recruited to CpG-rich transcription start sites of active genes via its interaction with TET proteins (TET1, TET2 or TET3). As part of the NSL complex indirectly involved in acetylation of nucleosomal histone H4 on several lysine residues. O-GlcNAcylation of 'Ser-75' of EZH2 increases its stability, and facilitating the formation of H3K27me3 by the PRC2/EED-EZH2 complex. Stabilizes KMT2E/MLL5 by mediating its glycosylation, thereby preventing KMT2E/MLL5 ubiquitination. Regulates circadian oscillation of the clock genes and glucose homeostasis in the liver. Stabilizes clock proteins BMAL1 and CLOCK through O-glycosylation, which prevents their ubiquitination and subsequent degradation. Promotes the CLOCK-BMAL1-mediated transcription of genes in the negative loop of the circadian clock such as PER1/2 and CRY1/2. O-glycosylates HCFC1 and regulates its proteolytic processing and transcriptional activity. Component of a THAP1/THAP3-HCFC1-OGT complex that is required for the regulation of the transcriptional activity of RRM1. Regulates mitochondrial motility in neurons by mediating glycosylation of TRAK1. Promotes autophagy by mediating O-glycosylation of ATG4B. Acts as a regulator of mTORC1 signaling by mediating O-glycosylation of RPTOR and FNIP1: O-GlcNAcylation of RPTOR in response to glucose sufficiency promotes activation of the mTORC1 complex. Its function is as follows. The mitochondrial isoform (mOGT) is cytotoxic and triggers apoptosis in several cell types including INS1, an insulinoma cell line. Has N-acetylglucosaminyltransferase activity: glycosylates proteins, such as HNRNPU, NEUROD1, NUP62 and PDCD6IP. Displays specific substrate selectivity compared to other isoforms. This Homo sapiens (Human) protein is UDP-N-acetylglucosamine--peptide N-acetylglucosaminyltransferase 110 kDa subunit.